The following is a 187-amino-acid chain: MPEVERKSKITASRKLMLKSLMLAKAKECWEQEHEEREAEKVRYLSERIPTLQTRGLSLSALQDLCRELHAKVEVVDEERYDIEAKCLHNTREIKDLKLKVLDLRGKFKRPPLRRVRVSADAMLRALLGSKHKVSMDLRANLKSVKKEDTEKERPVEVGDWRKNVEAMSGMEGRKKMFDAAKSPTLQ.

Proline 2 is subject to N-acetylproline. Residues 2-48 are involved in binding TNC; that stretch reads PEVERKSKITASRKLMLKSLMLAKAKECWEQEHEEREAEKVRYLSER. Residue serine 58 is modified to Phosphoserine. Residues 97–118 form an involved in binding TNC and actin region; the sequence is LKLKVLDLRGKFKRPPLRRVRV.

It belongs to the troponin I family. As to quaternary structure, binds to actin and tropomyosin.

Its function is as follows. Troponin I is the inhibitory subunit of troponin, the thin filament regulatory complex which confers calcium-sensitivity to striated muscle actomyosin ATPase activity. The protein is Troponin I, slow skeletal muscle (Tnni1) of Rattus norvegicus (Rat).